A 157-amino-acid polypeptide reads, in one-letter code: Protein Smg (157 aa).

Belongs to the Smg family.

In Pectobacterium atrosepticum (strain SCRI 1043 / ATCC BAA-672) (Erwinia carotovora subsp. atroseptica), this protein is Protein Smg.